The sequence spans 193 residues: 7-methyl-GTP pyrophosphatase (193 aa).

D70 (proton acceptor) is an active-site residue.

Belongs to the Maf family. YceF subfamily. Requires a divalent metal cation as cofactor.

The protein resides in the cytoplasm. It catalyses the reaction N(7)-methyl-GTP + H2O = N(7)-methyl-GMP + diphosphate + H(+). In terms of biological role, nucleoside triphosphate pyrophosphatase that hydrolyzes 7-methyl-GTP (m(7)GTP). May have a dual role in cell division arrest and in preventing the incorporation of modified nucleotides into cellular nucleic acids. This Vibrio parahaemolyticus serotype O3:K6 (strain RIMD 2210633) protein is 7-methyl-GTP pyrophosphatase.